A 226-amino-acid polypeptide reads, in one-letter code: Isoprenyl transferase (226 aa).

Asp-12 is a catalytic residue. Asp-12 provides a ligand contact to Mg(2+). Substrate contacts are provided by residues 13–16 (GNAR), Trp-17, Lys-25, His-29, and 57–59 (SSE). The active-site Proton acceptor is the Asn-60. Substrate contacts are provided by residues Trp-61, Arg-63, Arg-174, and 180 to 182 (RIS). A Mg(2+)-binding site is contributed by Glu-193.

This sequence belongs to the UPP synthase family. Homodimer. Mg(2+) serves as cofactor.

Catalyzes the condensation of isopentenyl diphosphate (IPP) with allylic pyrophosphates generating different type of terpenoids. The polypeptide is Isoprenyl transferase (Rickettsia typhi (strain ATCC VR-144 / Wilmington)).